We begin with the raw amino-acid sequence, 261 residues long: tRNA pseudouridine synthase A (261 aa).

Asp51 acts as the Nucleophile in catalysis. Tyr109 provides a ligand contact to substrate.

Belongs to the tRNA pseudouridine synthase TruA family. In terms of assembly, homodimer.

It catalyses the reaction uridine(38/39/40) in tRNA = pseudouridine(38/39/40) in tRNA. Its function is as follows. Formation of pseudouridine at positions 38, 39 and 40 in the anticodon stem and loop of transfer RNAs. This chain is tRNA pseudouridine synthase A, found in Shewanella amazonensis (strain ATCC BAA-1098 / SB2B).